A 491-amino-acid chain; its full sequence is Probable CtpA-like serine protease (491 aa).

Residues methionine 1–lysine 22 form a disordered region. Polar residues predominate over residues histidine 8–lysine 22. Residues leucine 31–valine 51 traverse the membrane as a helical segment. One can recognise a PDZ domain in the interval threonine 119–glycine 201. Catalysis depends on charge relay system residues serine 324, aspartate 335, and lysine 349.

It belongs to the peptidase S41A family.

The protein resides in the cell membrane. The polypeptide is Probable CtpA-like serine protease (Staphylococcus epidermidis (strain ATCC 35984 / DSM 28319 / BCRC 17069 / CCUG 31568 / BM 3577 / RP62A)).